A 134-amino-acid chain; its full sequence is DNA-directed RNA polymerase subunit omega (134 aa).

A disordered region spans residues 77-108; it reads IDEPEPDPASLLAAGGNASASGDEEEDAPEAV. Low complexity predominate over residues 85 to 97; the sequence is ASLLAAGGNASAS.

It belongs to the RNA polymerase subunit omega family. The RNAP catalytic core consists of 2 alpha, 1 beta, 1 beta' and 1 omega subunit. When a sigma factor is associated with the core the holoenzyme is formed, which can initiate transcription.

It carries out the reaction RNA(n) + a ribonucleoside 5'-triphosphate = RNA(n+1) + diphosphate. In terms of biological role, promotes RNA polymerase assembly. Latches the N- and C-terminal regions of the beta' subunit thereby facilitating its interaction with the beta and alpha subunits. The protein is DNA-directed RNA polymerase subunit omega of Rhizobium rhizogenes (strain K84 / ATCC BAA-868) (Agrobacterium radiobacter).